The following is a 135-amino-acid chain: Protein NrdI (135 aa).

It belongs to the NrdI family.

Its function is as follows. Probably involved in ribonucleotide reductase function. The chain is Protein NrdI from Brucella abortus (strain S19).